We begin with the raw amino-acid sequence, 429 residues long: Histidinol dehydrogenase (429 aa).

NAD(+)-binding residues include Y127, Q188, and N211. The substrate site is built by S234, Q256, and H259. Zn(2+) contacts are provided by Q256 and H259. Residues E324 and H325 each act as proton acceptor in the active site. Substrate-binding residues include H325, D358, E412, and H417. D358 contributes to the Zn(2+) binding site. Residue H417 participates in Zn(2+) binding.

Belongs to the histidinol dehydrogenase family. Zn(2+) serves as cofactor.

It catalyses the reaction L-histidinol + 2 NAD(+) + H2O = L-histidine + 2 NADH + 3 H(+). The protein operates within amino-acid biosynthesis; L-histidine biosynthesis; L-histidine from 5-phospho-alpha-D-ribose 1-diphosphate: step 9/9. Catalyzes the sequential NAD-dependent oxidations of L-histidinol to L-histidinaldehyde and then to L-histidine. The sequence is that of Histidinol dehydrogenase from Bacillus cereus (strain ATCC 10987 / NRS 248).